The primary structure comprises 464 residues: MKALYPDIITTVGIIFLIILELFLPSFDLIGFLGFLISFISGVLAIKYSLAGYRFNEWLLDINAFSLLLKGVMYILTSFVIFSSVSFFKSKKTFVENVYTFLLISLGLSIMVSSKNLAVILAGLELASISMYISVGMLRDDYISKEASFKYLVLGSMTTAFFGIGSAFYIGATSHLDIISVSVNHNTAFALASLFLFVAFALKVSAAPFHFWTPDAYEGAPTSNTAFISTVPKIGFYAVLFLLASYIFPVTNNFSYIVGIVGVISMFWGNLVAYAQNSAKRMLAYSSIGHAGYFLIGFSRYNPLSVSSTIFYVIVYAFATAGAFLVLSILEKNQSWTHDMSNYRALYKRSPFLATALALFLFALIGIPPFATFVGKLGIFLGLVNSNAWFFAILFVIGSIIAAGYYLKLIVYMFFKEPATKDNMSLSLNLFDTIGISAFLIIVFFFGIFPNILFDIILKDMFHG.

Transmembrane regions (helical) follow at residues 12–32 (VGIIFLIILELFLPSFDLIGF), 33–53 (LGFLISFISGVLAIKYSLAGY), 62–82 (INAFSLLLKGVMYILTSFVIF), 93–113 (TFVENVYTFLLISLGLSIMVS), 117–137 (LAVILAGLELASISMYISVGM), 152–172 (LVLGSMTTAFFGIGSAFYIGA), 189–209 (FALASLFLFVAFALKVSAAPF), 227–247 (FISTVPKIGFYAVLFLLASYI), 254–274 (FSYIVGIVGVISMFWGNLVAY), 282–304 (MLAYSSIGHAGYFLIGFSRYNPL), 310–330 (IFYVIVYAFATAGAFLVLSIL), 351–371 (PFLATALALFLFALIGIPPFA), 400–420 (IIAAGYYLKLIVYMFFKEPAT), and 434–454 (IGISAFLIIVFFFGIFPNILF).

Belongs to the complex I subunit 2 family. As to quaternary structure, NDH-1 is composed of 14 different subunits. Subunits NuoA, H, J, K, L, M, N constitute the membrane sector of the complex.

Its subcellular location is the cell inner membrane. It catalyses the reaction a quinone + NADH + 5 H(+)(in) = a quinol + NAD(+) + 4 H(+)(out). NDH-1 shuttles electrons from NADH, via FMN and iron-sulfur (Fe-S) centers, to quinones in the respiratory chain. The immediate electron acceptor for the enzyme in this species is believed to be ubiquinone. Couples the redox reaction to proton translocation (for every two electrons transferred, four hydrogen ions are translocated across the cytoplasmic membrane), and thus conserves the redox energy in a proton gradient. The polypeptide is NADH-quinone oxidoreductase subunit N 2 (Hydrogenobaculum sp. (strain Y04AAS1)).